Consider the following 322-residue polypeptide: Sideroflexin-2 (322 aa).

N-acetylmethionine is present on M1. The next 5 helical transmembrane spans lie at 100–122, 142–164, 174–192, 228–250, and 265–287; these read MIITGFMLQFYRTMPAVIFWQWV, SVRQMALSYFTATTTAVATAVGM, LVGRWVPFAAVAAANCVNI, VVISRITMSAPGMILLPVIMERL, and PLQVMLSGCFLIFMVPVACGLFP.

The protein belongs to the sideroflexin family. In terms of tissue distribution, widely expressed, highest levels in kidney, liver, and pancreas.

It localises to the mitochondrion inner membrane. The protein resides in the mitochondrion outer membrane. The catalysed reaction is L-serine(in) = L-serine(out). Functionally, mitochondrial amino-acid transporter that mediates transport of serine into mitochondria. Involved in mitochondrial iron homeostasis by regulating heme biosynthesis. This chain is Sideroflexin-2, found in Homo sapiens (Human).